The primary structure comprises 188 residues: Kappa-casein (188 aa).

The first 21 residues, 1–21 (MMKSSFLIVPILALTLPFLGA), serve as a signal peptide directing secretion. 2 O-linked (GalNAc...) threonine glycosylation sites follow: T143 and T148. Position 163 is a phosphothreonine (T163). S167 is modified (phosphoserine; alternate). A glycan (O-linked (GalNAc...) serine; alternate) is linked at S167. T184 is a glycosylation site (O-linked (GalNAc...) threonine). The residue at position 185 (S185) is a Phosphoserine.

The protein belongs to the kappa-casein family. In terms of tissue distribution, mammary gland specific. Secreted in milk.

It localises to the secreted. Kappa-casein stabilizes micelle formation, preventing casein precipitation in milk. This is Kappa-casein (CSN3) from Sus scrofa (Pig).